We begin with the raw amino-acid sequence, 370 residues long: NADH-quinone oxidoreductase subunit D (370 aa).

This sequence belongs to the complex I 49 kDa subunit family. As to quaternary structure, NDH-1 is composed of 14 different subunits. Subunits NuoB, C, D, E, F, and G constitute the peripheral sector of the complex.

It is found in the cell membrane. The enzyme catalyses a quinone + NADH + 5 H(+)(in) = a quinol + NAD(+) + 4 H(+)(out). Its function is as follows. NDH-1 shuttles electrons from NADH, via FMN and iron-sulfur (Fe-S) centers, to quinones in the respiratory chain. The immediate electron acceptor for the enzyme in this species is believed to be a menaquinone. Couples the redox reaction to proton translocation (for every two electrons transferred, four hydrogen ions are translocated across the cytoplasmic membrane), and thus conserves the redox energy in a proton gradient. In Clostridium beijerinckii (strain ATCC 51743 / NCIMB 8052) (Clostridium acetobutylicum), this protein is NADH-quinone oxidoreductase subunit D.